Reading from the N-terminus, the 333-residue chain is tRNA N6-adenosine threonylcarbamoyltransferase (333 aa).

2 residues coordinate Fe cation: His-111 and His-115. Substrate contacts are provided by residues 134–138 (LASGG), Asp-167, Gly-180, and Asn-273. Asp-301 is a Fe cation binding site.

Belongs to the KAE1 / TsaD family. Requires Fe(2+) as cofactor.

It is found in the cytoplasm. It catalyses the reaction L-threonylcarbamoyladenylate + adenosine(37) in tRNA = N(6)-L-threonylcarbamoyladenosine(37) in tRNA + AMP + H(+). In terms of biological role, required for the formation of a threonylcarbamoyl group on adenosine at position 37 (t(6)A37) in tRNAs that read codons beginning with adenine. Is involved in the transfer of the threonylcarbamoyl moiety of threonylcarbamoyl-AMP (TC-AMP) to the N6 group of A37, together with TsaE and TsaB. TsaD likely plays a direct catalytic role in this reaction. This is tRNA N6-adenosine threonylcarbamoyltransferase from Desulforapulum autotrophicum (strain ATCC 43914 / DSM 3382 / VKM B-1955 / HRM2) (Desulfobacterium autotrophicum).